A 471-amino-acid polypeptide reads, in one-letter code: ATP synthase subunit beta (471 aa).

152–159 serves as a coordination point for ATP; the sequence is GGAGVGKT.

Belongs to the ATPase alpha/beta chains family. In terms of assembly, F-type ATPases have 2 components, CF(1) - the catalytic core - and CF(0) - the membrane proton channel. CF(1) has five subunits: alpha(3), beta(3), gamma(1), delta(1), epsilon(1). CF(0) has three main subunits: a(1), b(2) and c(9-12). The alpha and beta chains form an alternating ring which encloses part of the gamma chain. CF(1) is attached to CF(0) by a central stalk formed by the gamma and epsilon chains, while a peripheral stalk is formed by the delta and b chains.

The protein localises to the cell membrane. It carries out the reaction ATP + H2O + 4 H(+)(in) = ADP + phosphate + 5 H(+)(out). Its function is as follows. Produces ATP from ADP in the presence of a proton gradient across the membrane. The catalytic sites are hosted primarily by the beta subunits. The chain is ATP synthase subunit beta from Herpetosiphon aurantiacus (Herpetosiphon giganteus).